The sequence spans 275 residues: Large ribosomal subunit protein uL2 (275 aa).

The disordered stretch occupies residues 221 to 275; sequence RGTAMNPVDHPHGGGEGRTGEGRVPVNPWGQPTKGYRTRSNKRTNSMIVQRRHKR. The span at 229–241 shows a compositional bias: basic and acidic residues; the sequence is DHPHGGGEGRTGE.

It belongs to the universal ribosomal protein uL2 family. In terms of assembly, part of the 50S ribosomal subunit. Forms a bridge to the 30S subunit in the 70S ribosome.

In terms of biological role, one of the primary rRNA binding proteins. Required for association of the 30S and 50S subunits to form the 70S ribosome, for tRNA binding and peptide bond formation. It has been suggested to have peptidyltransferase activity; this is somewhat controversial. Makes several contacts with the 16S rRNA in the 70S ribosome. This Dechloromonas aromatica (strain RCB) protein is Large ribosomal subunit protein uL2.